Reading from the N-terminus, the 307-residue chain is Mycothiol acetyltransferase (307 aa).

N-acetyltransferase domains lie at 15 to 158 (HTLD…LAEP) and 164 to 307 (VTVR…RTES). Position 46 (glutamate 46) interacts with 1D-myo-inositol 2-(L-cysteinylamino)-2-deoxy-alpha-D-glucopyranoside. 90 to 92 (LVV) serves as a coordination point for acetyl-CoA. Residues glutamate 191, lysine 230, and glutamate 239 each coordinate 1D-myo-inositol 2-(L-cysteinylamino)-2-deoxy-alpha-D-glucopyranoside. Residues 243 to 245 (VGV) and 250 to 256 (QGGGLGK) each bind acetyl-CoA. Tyrosine 277 lines the 1D-myo-inositol 2-(L-cysteinylamino)-2-deoxy-alpha-D-glucopyranoside pocket.

Belongs to the acetyltransferase family. MshD subfamily. As to quaternary structure, monomer.

It catalyses the reaction 1D-myo-inositol 2-(L-cysteinylamino)-2-deoxy-alpha-D-glucopyranoside + acetyl-CoA = mycothiol + CoA + H(+). Its function is as follows. Catalyzes the transfer of acetyl from acetyl-CoA to desacetylmycothiol (Cys-GlcN-Ins) to form mycothiol. The protein is Mycothiol acetyltransferase of Streptomyces griseus subsp. griseus (strain JCM 4626 / CBS 651.72 / NBRC 13350 / KCC S-0626 / ISP 5235).